Consider the following 205-residue polypeptide: Probable inactive peroxygenase-like protein (205 aa).

The short motif at 79–88 is the Proline-knot element; it reads PVQLFGYILP. Ser183 bears the Phosphoserine mark.

Belongs to the caleosin family.

It localises to the lipid droplet. The sequence is that of Probable inactive peroxygenase-like protein from Arabidopsis thaliana (Mouse-ear cress).